A 142-amino-acid chain; its full sequence is Large ribosomal subunit protein uL13 (142 aa).

This sequence belongs to the universal ribosomal protein uL13 family. Part of the 50S ribosomal subunit.

Its function is as follows. This protein is one of the early assembly proteins of the 50S ribosomal subunit, although it is not seen to bind rRNA by itself. It is important during the early stages of 50S assembly. The protein is Large ribosomal subunit protein uL13 of Aromatoleum aromaticum (strain DSM 19018 / LMG 30748 / EbN1) (Azoarcus sp. (strain EbN1)).